Here is a 150-residue protein sequence, read N- to C-terminus: AN1-type zinc finger protein TMC1 (150 aa).

The disordered stretch occupies residues 1-82; sequence MSDINEIEIP…TKKTTKKKKK (82 aa). S2 is modified (N-acetylserine). Basic and acidic residues predominate over residues 23–33; the sequence is DPMHEIEDKST. 2 positions are modified to phosphoserine: S43 and S54. The span at 53–70 shows a compositional bias: low complexity; sequence NSRSSSNSSVTSTGQSSR. Residues 71-82 are compositionally biased toward basic residues; sequence RVTKKTTKKKKK. The segment at 79–128 adopts an AN1-type zinc-finger fold; that stretch reads KKKKNACYFDTCSSAASKFIGDCNFCKGHFCSKHRLMENHACNGLTSCKE. C85, C90, C101, C104, C109, H112, H118, and C120 together coordinate Zn(2+).

It localises to the nucleus. Its function is as follows. May have a role in protecting cells from metalloid-induced proteotoxicity. The chain is AN1-type zinc finger protein TMC1 from Saccharomyces cerevisiae (strain ATCC 204508 / S288c) (Baker's yeast).